The primary structure comprises 101 residues: Protein Tat (101 aa).

Residues 1-24 (MEPVDPNREPWNHPGSQPKTACTN) form an interaction with human CREBBP region. The segment at 1 to 48 (MEPVDPNREPWNHPGSQPKTACTNCYCKKCCYHCQVCFLQKGLGISYG) is transactivation. Zn(2+) contacts are provided by cysteine 22, cysteine 25, and cysteine 27. The cysteine-rich stretch occupies residues 22 to 37 (CTNCYCKKCCYHCQVC). Lysine 28 is subject to N6-acetyllysine; by host PCAF. Positions 30, 33, 34, and 37 each coordinate Zn(2+). The segment at 38 to 48 (FLQKGLGISYG) is core. The tract at residues 48–101 (GRKKRRQRRSAPPGSKTHQDLIPKQPLSQTQRKPTGPEESKKEVESKAEPDRFD) is disordered. The Nuclear localization signal, RNA-binding (TAR), and protein transduction signature appears at 49–57 (RKKRRQRRS). Residues 49–86 (RKKRRQRRSAPPGSKTHQDLIPKQPLSQTQRKPTGPEE) form an interaction with the host capping enzyme RNGTT region. An N6-acetyllysine; by host EP300 and GCN5L2 mark is found at lysine 50 and lysine 51. Asymmetric dimethylarginine; by host PRMT6 occurs at positions 52 and 53. A Glycyl lysine isopeptide (Lys-Gly) (interchain with G-Cter in ubiquitin) cross-link involves residue lysine 71. Over residues 82–101 (TGPEESKKEVESKAEPDRFD) the composition is skewed to basic and acidic residues.

Belongs to the lentiviruses Tat family. As to quaternary structure, interacts with host CCNT1. Associates with the P-TEFb complex composed at least of Tat, P-TEFb (CDK9 and CCNT1), TAR RNA, RNA Pol II. Recruits the HATs CREBBP, TAF1/TFIID, EP300, PCAF and GCN5L2. Interacts with host KAT5/Tip60; this interaction targets the latter to degradation. Interacts with the host deacetylase SIRT1. Interacts with host capping enzyme RNGTT; this interaction stimulates RNGTT. Binds to host KDR, and to the host integrins ITGAV/ITGB3 and ITGA5/ITGB1. Interacts with host KPNB1/importin beta-1 without previous binding to KPNA1/importin alpha-1. Interacts with EIF2AK2. Interacts with host nucleosome assembly protein NAP1L1; this interaction may be required for the transport of Tat within the nucleus, since the two proteins interact at the nuclear rim. Interacts with host C1QBP/SF2P32; this interaction involves lysine-acetylated Tat. Interacts with the host chemokine receptors CCR2, CCR3 and CXCR4. Interacts with host DPP4/CD26; this interaction may trigger an anti-proliferative effect. Interacts with host LDLR. Interacts with the host extracellular matrix metalloproteinase MMP1. Interacts with host PRMT6; this interaction mediates Tat's methylation. Interacts with, and is ubiquitinated by MDM2/Hdm2. Interacts with host PSMC3 and HTATIP2. Interacts with STAB1; this interaction may overcome SATB1-mediated repression of IL2 and IL2RA (interleukin) in T cells by binding to the same domain than HDAC1. Interacts (when acetylated) with human CDK13, thereby increasing HIV-1 mRNA splicing and promoting the production of the doubly spliced HIV-1 protein Nef. Interacts with host TBP; this interaction modulates the activity of transcriptional pre-initiation complex. Interacts with host RELA. Interacts with host PLSCR1; this interaction negatively regulates Tat transactivation activity by altering its subcellular distribution. Asymmetrical arginine methylation by host PRMT6 seems to diminish the transactivation capacity of Tat and affects the interaction with host CCNT1. Post-translationally, acetylation by EP300, CREBBP, GCN5L2/GCN5 and PCAF regulates the transactivation activity of Tat. EP300-mediated acetylation of Lys-50 promotes dissociation of Tat from the TAR RNA through the competitive binding to PCAF's bromodomain. In addition, the non-acetylated Tat's N-terminus can also interact with PCAF. PCAF-mediated acetylation of Lys-28 enhances Tat's binding to CCNT1. Lys-50 is deacetylated by SIRT1. In terms of processing, polyubiquitination by host MDM2 does not target Tat to degradation, but activates its transactivation function and fosters interaction with CCNT1 and TAR RNA. Phosphorylated by EIF2AK2 on serine and threonine residues adjacent to the basic region important for TAR RNA binding and function. Phosphorylation of Tat by EIF2AK2 is dependent on the prior activation of EIF2AK2 by dsRNA.

The protein localises to the host nucleus. Its subcellular location is the host nucleolus. It localises to the host cytoplasm. The protein resides in the secreted. In terms of biological role, transcriptional activator that increases RNA Pol II processivity, thereby increasing the level of full-length viral transcripts. Recognizes a hairpin structure at the 5'-LTR of the nascent viral mRNAs referred to as the transactivation responsive RNA element (TAR) and recruits the cyclin T1-CDK9 complex (P-TEFb complex) that will in turn hyperphosphorylate the RNA polymerase II to allow efficient elongation. The CDK9 component of P-TEFb and other Tat-activated kinases hyperphosphorylate the C-terminus of RNA Pol II that becomes stabilized and much more processive. Other factors such as HTATSF1/Tat-SF1, SUPT5H/SPT5, and HTATIP2 are also important for Tat's function. Besides its effect on RNA Pol II processivity, Tat induces chromatin remodeling of proviral genes by recruiting the histone acetyltransferases (HATs) CREBBP, EP300 and PCAF to the chromatin. This also contributes to the increase in proviral transcription rate, especially when the provirus integrates in transcriptionally silent region of the host genome. To ensure maximal activation of the LTR, Tat mediates nuclear translocation of NF-kappa-B by interacting with host RELA. Through its interaction with host TBP, Tat may also modulate transcription initiation. Tat can reactivate a latently infected cell by penetrating in it and transactivating its LTR promoter. In the cytoplasm, Tat is thought to act as a translational activator of HIV-1 mRNAs. Functionally, extracellular circulating Tat can be endocytosed by surrounding uninfected cells via the binding to several surface receptors such as CD26, CXCR4, heparan sulfate proteoglycans (HSPG) or LDLR. Neurons are rarely infected, but they internalize Tat via their LDLR. Through its interaction with nuclear HATs, Tat is potentially able to control the acetylation-dependent cellular gene expression. Modulates the expression of many cellular genes involved in cell survival, proliferation or in coding for cytokines or cytokine receptors. Tat plays a role in T-cell and neurons apoptosis. Tat induced neurotoxicity and apoptosis probably contribute to neuroAIDS. Circulating Tat also acts as a chemokine-like and/or growth factor-like molecule that binds to specific receptors on the surface of the cells, affecting many cellular pathways. In the vascular system, Tat binds to ITGAV/ITGB3 and ITGA5/ITGB1 integrins dimers at the surface of endothelial cells and competes with bFGF for heparin-binding sites, leading to an excess of soluble bFGF. In Homo sapiens (Human), this protein is Protein Tat.